Reading from the N-terminus, the 420-residue chain is Methylaspartate ammonia-lyase 1 (420 aa).

A (2S,3S)-3-methyl-L-aspartate-binding site is contributed by Q173. Residues D237, E272, and D306 each coordinate Mg(2+). Residue Q328 coordinates (2S,3S)-3-methyl-L-aspartate. K330 acts as the Proton acceptor in catalysis. A (2S,3S)-3-methyl-L-aspartate-binding site is contributed by 359–360; that stretch reads SC.

Homodimer. Requires Mg(2+) as cofactor.

It carries out the reaction (2S,3S)-3-methyl-L-aspartate = mesaconate + NH4(+). It participates in amino-acid degradation; L-glutamate degradation via mesaconate pathway; acetate and pyruvate from L-glutamate: step 2/4. Functionally, involved in the methylaspartate cycle. Catalyzes the formation of the alpha,beta-unsaturated bond by the reversible anti elimination of ammonia from L-threo-beta-methylaspartate (L-threo-(2S,3S)-3-methylaspartate) to give mesaconate. It can also catalyze the amination of fumarate and ethylfumarate, and the deamination of hydroxylamine, hydrazine, methylamine and ethylamine. This chain is Methylaspartate ammonia-lyase 1, found in Carboxydothermus hydrogenoformans (strain ATCC BAA-161 / DSM 6008 / Z-2901).